We begin with the raw amino-acid sequence, 622 residues long: Low affinity potassium transport system protein Kup (622 aa).

The next 12 membrane-spanning stretches (helical) occupy residues 9 to 29 (LPAI…TSPL), 49 to 69 (VFGF…IKYL), 103 to 123 (VIMG…TPAI), 137 to 157 (PQLD…LFMI), 165 to 185 (VGKL…VLGL), 213 to 233 (VSFI…ALYA), 247 to 267 (WFTV…ALLL), 276 to 296 (PFFL…AALA), 337 to 357 (IYIP…IVSF), 363 to 383 (LAAA…ILST), 396 to 416 (FVAL…SANL), and 419 to 439 (LLSG…IMTT).

It belongs to the HAK/KUP transporter (TC 2.A.72) family.

The protein localises to the cell inner membrane. It carries out the reaction K(+)(in) + H(+)(in) = K(+)(out) + H(+)(out). Its function is as follows. Responsible for the low-affinity transport of potassium into the cell. Likely operates as a K(+):H(+) symporter. This Salmonella paratyphi B (strain ATCC BAA-1250 / SPB7) protein is Low affinity potassium transport system protein Kup.